The sequence spans 343 residues: MQAIIDAEQSFKFPVLVGDIGGTNARFSILVDSNAEPKEFPVLQTADYATIDEAIQHAILDQTAIQPRSVILAVAGPVDGDEIDLTNCDWVVRPKKMIADLGFEDVTVLNDFEAQALAVVSLEGHHMEQIGGKPEEAVATRVVLGPGTGLGVAGLVCTRHAWVPVPGEGGHIDIGPRTERDYQIFPHIERIEGRVTGEQILSGRGLRNLYLGICAADKITPTLETPVDITSAGLDGSNPQAAETLDLFATYLGRLAGDLALIFMAHGGVYLSGGIPVRILSALKAGSFRAAFEDKAPNKAIMRDIPVRVITYQLAALTGLSAFARTPSRFEVSTEGRRWRMRR.

18–23 provides a ligand contact to ATP; it reads GDIGGT.

The protein belongs to the bacterial glucokinase family.

The protein resides in the cytoplasm. The enzyme catalyses D-glucose + ATP = D-glucose 6-phosphate + ADP + H(+). In Brucella melitensis biotype 1 (strain ATCC 23456 / CCUG 17765 / NCTC 10094 / 16M), this protein is Glucokinase.